A 560-amino-acid polypeptide reads, in one-letter code: Light-independent protochlorophyllide reductase subunit N (560 aa).

[4Fe-4S] cluster contacts are provided by Cys-24, Cys-49, and Cys-109. Residues 173 to 182 (NSLFNQSSNS) are compositionally biased toward low complexity. The disordered stretch occupies residues 173–210 (NSLFNQSSNSPENLKTLNTKKDTFQNSTENSKTFSAEK). Residues 196–206 (FQNSTENSKTF) show a composition bias toward polar residues.

It belongs to the BchN/ChlN family. As to quaternary structure, protochlorophyllide reductase is composed of three subunits; ChlL, ChlN and ChlB. Forms a heterotetramer of two ChlB and two ChlN subunits. The cofactor is [4Fe-4S] cluster.

The protein resides in the plastid. The protein localises to the chloroplast. The catalysed reaction is chlorophyllide a + oxidized 2[4Fe-4S]-[ferredoxin] + 2 ADP + 2 phosphate = protochlorophyllide a + reduced 2[4Fe-4S]-[ferredoxin] + 2 ATP + 2 H2O. It functions in the pathway porphyrin-containing compound metabolism; chlorophyll biosynthesis (light-independent). Functionally, component of the dark-operative protochlorophyllide reductase (DPOR) that uses Mg-ATP and reduced ferredoxin to reduce ring D of protochlorophyllide (Pchlide) to form chlorophyllide a (Chlide). This reaction is light-independent. The NB-protein (ChlN-ChlB) is the catalytic component of the complex. The sequence is that of Light-independent protochlorophyllide reductase subunit N from Tetradesmus obliquus (Green alga).